A 364-amino-acid polypeptide reads, in one-letter code: tRNA 2-selenouridine synthase (364 aa).

The 124-residue stretch at 14 to 137 (LIADTPIIDV…LRQTAIQATI (124 aa)) folds into the Rhodanese domain. Catalysis depends on C97, which acts as the S-selanylcysteine intermediate.

It belongs to the SelU family. In terms of assembly, monomer.

The catalysed reaction is 5-methylaminomethyl-2-thiouridine(34) in tRNA + selenophosphate + (2E)-geranyl diphosphate + H2O + H(+) = 5-methylaminomethyl-2-selenouridine(34) in tRNA + (2E)-thiogeraniol + phosphate + diphosphate. It catalyses the reaction 5-methylaminomethyl-2-thiouridine(34) in tRNA + (2E)-geranyl diphosphate = 5-methylaminomethyl-S-(2E)-geranyl-thiouridine(34) in tRNA + diphosphate. The enzyme catalyses 5-methylaminomethyl-S-(2E)-geranyl-thiouridine(34) in tRNA + selenophosphate + H(+) = 5-methylaminomethyl-2-(Se-phospho)selenouridine(34) in tRNA + (2E)-thiogeraniol. It carries out the reaction 5-methylaminomethyl-2-(Se-phospho)selenouridine(34) in tRNA + H2O = 5-methylaminomethyl-2-selenouridine(34) in tRNA + phosphate. In terms of biological role, involved in the post-transcriptional modification of the uridine at the wobble position (U34) of tRNA(Lys), tRNA(Glu) and tRNA(Gln). Catalyzes the conversion of 2-thiouridine (S2U-RNA) to 2-selenouridine (Se2U-RNA). Acts in a two-step process involving geranylation of 2-thiouridine (S2U) to S-geranyl-2-thiouridine (geS2U) and subsequent selenation of the latter derivative to 2-selenouridine (Se2U) in the tRNA chain. The sequence is that of tRNA 2-selenouridine synthase from Escherichia coli O127:H6 (strain E2348/69 / EPEC).